The chain runs to 343 residues: Putative adenosine/adenine deaminase (343 aa).

Residues His-16, His-18, and His-204 each coordinate Zn(2+). His-18 is a binding site for substrate. Glu-207 (proton donor) is an active-site residue. Asp-285 is a Zn(2+) binding site. Residue Asp-286 participates in substrate binding.

The protein belongs to the metallo-dependent hydrolases superfamily. Adenosine and AMP deaminases family. It depends on Zn(2+) as a cofactor.

Functionally, putative nucleoside deaminase. May catalyze the hydrolytic deamination of adenosine or some similar substrate and play a role in purine metabolism. This Streptomyces coelicolor (strain ATCC BAA-471 / A3(2) / M145) protein is Putative adenosine/adenine deaminase.